We begin with the raw amino-acid sequence, 263 residues long: Uroporphyrinogen-III C-methyltransferase (263 aa).

Residues P20, 96-98, 126-127, M180, and A237 contribute to the S-adenosyl-L-homocysteine site; these read GGD and TA.

It belongs to the precorrin methyltransferase family.

It catalyses the reaction uroporphyrinogen III + 2 S-adenosyl-L-methionine = precorrin-2 + 2 S-adenosyl-L-homocysteine + H(+). It functions in the pathway cofactor biosynthesis; adenosylcobalamin biosynthesis; precorrin-2 from uroporphyrinogen III: step 1/1. It participates in porphyrin-containing compound metabolism; siroheme biosynthesis; precorrin-2 from uroporphyrinogen III: step 1/1. Its function is as follows. Catalyzes the two successive C-2 and C-7 methylation reactions involved in the conversion of uroporphyrinogen III to precorrin-2 via the intermediate formation of precorrin-1. It is a step in the biosynthesis of both cobalamin (vitamin B12) and siroheme. The protein is Uroporphyrinogen-III C-methyltransferase (cobA) of Synechocystis sp. (strain ATCC 27184 / PCC 6803 / Kazusa).